The following is a 475-amino-acid chain: FAD-dependent monooxygenase janM (475 aa).

Residues valine 8–leucine 24 form a helical membrane-spanning segment. FAD is bound by residues glutamate 35, glycine 49, and arginine 108. Asparagine 147 carries N-linked (GlcNAc...) asparagine glycosylation. Residues aspartate 299 and alanine 312 each coordinate FAD. Residues glycine 432–valine 451 form a helical membrane-spanning segment.

The protein belongs to the paxM FAD-dependent monooxygenase family. It depends on FAD as a cofactor.

It is found in the membrane. It participates in secondary metabolite biosynthesis. In terms of biological role, FAD-dependent monooxygenase; part of the gene cluster that mediates the biosynthesis of the indole diterpenes janthitremanes such as shearinine K or shearinine A. The geranylgeranyl diphosphate (GGPP) synthase janG catalyzes the first step in janthitremane biosynthesis via conversion of farnesyl pyrophosphate and isopentyl pyrophosphate into geranylgeranyl pyrophosphate (GGPP). Condensation of indole-3-glycerol phosphate with GGPP by the prenyl transferase janC then forms 3-geranylgeranylindole (3-GGI). Epoxidation by the FAD-dependent monooxygenase janM leads to a epoxidized-GGI that is substrate of the terpene cyclase janB for cyclization to yield paspaline. Paspaline is subsequently converted to 13-desoxypaspaline by the cytochrome P450 monooxygenase janP, via beta-PC-M6 in a series of alpha-face oxidations. The cytochrome P450 monooxygenase janQ is proposed to carry out sequential beta-face oxidation steps at C-7 and C-13 of 13-desoxypaspaline to form paspalicine and paspalinine respectively. The indole diterpene prenyltransferase janD may then convert paspalinine into shearinine K which is substrate of janO and/or additional enzymes for oxidation and cyclization to generate shearinine A. The chain is FAD-dependent monooxygenase janM from Penicillium janthinellum (Penicillium vitale).